Consider the following 160-residue polypeptide: Lipoprotein signal peptidase (160 aa).

The next 3 membrane-spanning stretches (helical) occupy residues 13 to 33 (IYIT…HLII), 72 to 92 (WFLS…ITKL), and 104 to 124 (SLII…GFVV). Catalysis depends on residues Asp125 and Asp143. The chain crosses the membrane as a helical span at residues 134 to 154 (WHFATFNIADCSIFIGIIILM).

Belongs to the peptidase A8 family.

It is found in the cell inner membrane. It carries out the reaction Release of signal peptides from bacterial membrane prolipoproteins. Hydrolyzes -Xaa-Yaa-Zaa-|-(S,diacylglyceryl)Cys-, in which Xaa is hydrophobic (preferably Leu), and Yaa (Ala or Ser) and Zaa (Gly or Ala) have small, neutral side chains.. It participates in protein modification; lipoprotein biosynthesis (signal peptide cleavage). In terms of biological role, this protein specifically catalyzes the removal of signal peptides from prolipoproteins. The chain is Lipoprotein signal peptidase from Buchnera aphidicola subsp. Acyrthosiphon pisum (strain Tuc7).